Reading from the N-terminus, the 758-residue chain is Probable TonB-dependent receptor NMB0964 (758 aa).

The first 24 residues, 1 to 24 (MAQTTLKPIVLSILLINTPLLAQA), serve as a signal peptide directing secretion. The 112-residue stretch at 50-161 (LLHTSTASDK…VAGLVDVADG (112 aa)) folds into the TBDR plug domain. Residues 171–758 (GVSGELGLRL…SFTGGVNVKF (588 aa)) form the TBDR beta-barrel domain. The TonB C-terminal box signature appears at 741–758 (SDTPQMGRSFTGGVNVKF).

Belongs to the TonB-dependent receptor family.

The protein resides in the cell outer membrane. In terms of biological role, probable receptor, TonB-dependent. The polypeptide is Probable TonB-dependent receptor NMB0964 (Neisseria meningitidis serogroup B (strain ATCC BAA-335 / MC58)).